The following is a 418-amino-acid chain: UDP-N-acetylglucosamine 1-carboxyvinyltransferase (418 aa).

22–23 (KN) provides a ligand contact to phosphoenolpyruvate. A UDP-N-acetyl-alpha-D-glucosamine-binding site is contributed by Arg92. Cys116 serves as the catalytic Proton donor. Cys116 carries the post-translational modification 2-(S-cysteinyl)pyruvic acid O-phosphothioketal. Residues 121–125 (RPIDL), Asp305, and Leu327 contribute to the UDP-N-acetyl-alpha-D-glucosamine site.

Belongs to the EPSP synthase family. MurA subfamily.

It localises to the cytoplasm. The catalysed reaction is phosphoenolpyruvate + UDP-N-acetyl-alpha-D-glucosamine = UDP-N-acetyl-3-O-(1-carboxyvinyl)-alpha-D-glucosamine + phosphate. It participates in cell wall biogenesis; peptidoglycan biosynthesis. In terms of biological role, cell wall formation. Adds enolpyruvyl to UDP-N-acetylglucosamine. The sequence is that of UDP-N-acetylglucosamine 1-carboxyvinyltransferase from Campylobacter jejuni (strain RM1221).